Here is a 175-residue protein sequence, read N- to C-terminus: Trafficking protein particle complex subunit 20 (175 aa).

This sequence belongs to the TRAPP small subunits family. Sedlin subfamily. In terms of assembly, part of the multisubunit TRAPP (transport protein particle) I complex composed of BET3, BET5, TRS20, TRS23, TRS31 and TRS33. Part of the multisubunit TRAPP (transport protein particle) II complex composed of BET3, BET5, TRS20, TRS23, TRS31, TRS33, TRS65, TRS85, TRS120 and TRS130. Part of the multisubunit TRAPP (transport protein particle) III complex composed of BET3, BET5, TRS20, TRS23, TRS31, TRS33 and TRS85.

It localises to the golgi apparatus. Its subcellular location is the cis-Golgi network. It is found in the endoplasmic reticulum. The protein resides in the preautophagosomal structure. Its function is as follows. Component of the TRAPP I, TRAPP II and TRAPP III complexes which act as guanine nucleotide exchange factors (GEF) for YPT1. TRAPP I plays a key role in the late stages of endoplasmic reticulum to Golgi traffic. TRAPP II plays a role in intra-Golgi transport. TRAPP III plays a role in autophagosome formation. This Saccharomyces cerevisiae (strain ATCC 204508 / S288c) (Baker's yeast) protein is Trafficking protein particle complex subunit 20 (TRS20).